A 940-amino-acid polypeptide reads, in one-letter code: Isoleucine--tRNA ligase (940 aa).

Positions 58–68 (PYANGSIHIGH) match the 'HIGH' region motif. Glu564 contacts L-isoleucyl-5'-AMP. The short motif at 605–609 (KMSKS) is the 'KMSKS' region element. Lys608 lines the ATP pocket. The Zn(2+) site is built by Cys903, Cys906, Cys923, and Cys926.

This sequence belongs to the class-I aminoacyl-tRNA synthetase family. IleS type 1 subfamily. In terms of assembly, monomer. Requires Zn(2+) as cofactor.

The protein resides in the cytoplasm. The catalysed reaction is tRNA(Ile) + L-isoleucine + ATP = L-isoleucyl-tRNA(Ile) + AMP + diphosphate. Its function is as follows. Catalyzes the attachment of isoleucine to tRNA(Ile). As IleRS can inadvertently accommodate and process structurally similar amino acids such as valine, to avoid such errors it has two additional distinct tRNA(Ile)-dependent editing activities. One activity is designated as 'pretransfer' editing and involves the hydrolysis of activated Val-AMP. The other activity is designated 'posttransfer' editing and involves deacylation of mischarged Val-tRNA(Ile). The polypeptide is Isoleucine--tRNA ligase (Shewanella sp. (strain MR-7)).